The following is a 232-amino-acid chain: Phosphatidylserine decarboxylase proenzyme (232 aa).

Ser-190 functions as the Schiff-base intermediate with substrate; via pyruvic acid in the catalytic mechanism. Ser-190 bears the Pyruvic acid (Ser); by autocatalysis mark.

This sequence belongs to the phosphatidylserine decarboxylase family. PSD-A subfamily. As to quaternary structure, heterodimer of a large membrane-associated beta subunit and a small pyruvoyl-containing alpha subunit. Pyruvate is required as a cofactor. In terms of processing, is synthesized initially as an inactive proenzyme. Formation of the active enzyme involves a self-maturation process in which the active site pyruvoyl group is generated from an internal serine residue via an autocatalytic post-translational modification. Two non-identical subunits are generated from the proenzyme in this reaction, and the pyruvate is formed at the N-terminus of the alpha chain, which is derived from the carboxyl end of the proenzyme. The post-translation cleavage follows an unusual pathway, termed non-hydrolytic serinolysis, in which the side chain hydroxyl group of the serine supplies its oxygen atom to form the C-terminus of the beta chain, while the remainder of the serine residue undergoes an oxidative deamination to produce ammonia and the pyruvoyl prosthetic group on the alpha chain.

The protein localises to the cell membrane. It catalyses the reaction a 1,2-diacyl-sn-glycero-3-phospho-L-serine + H(+) = a 1,2-diacyl-sn-glycero-3-phosphoethanolamine + CO2. It functions in the pathway phospholipid metabolism; phosphatidylethanolamine biosynthesis; phosphatidylethanolamine from CDP-diacylglycerol: step 2/2. In terms of biological role, catalyzes the formation of phosphatidylethanolamine (PtdEtn) from phosphatidylserine (PtdSer). The sequence is that of Phosphatidylserine decarboxylase proenzyme from Mesorhizobium japonicum (strain LMG 29417 / CECT 9101 / MAFF 303099) (Mesorhizobium loti (strain MAFF 303099)).